A 495-amino-acid chain; its full sequence is MEFLVKSVRPETLKTATLVLAVGEGRKLGASAKAVDDATGGAISAVLKRGDLAGKVGQTLLLQSLPNLKAERVLLVGAGKERELGDRQYRKLASAVLSTLKGLAGADAALALGDLAVKGRDAHAKARLLVETLADGLYVFDRYKSQKAEPLKLKKLTLLADKADSAAVEQGSKEAQAIANGMALTRDLGNLPPNVCHPTFLGEQAKGLAKEFKGLKVEVLDEKKLRELGMGSFLAVAQGSDQPPRLIVLQYNGAKKDQAPHVLVGKGITFDTGGISLKPGLGMDEMKFDMCGAASVFGTFRAVLELQLPINLVGLLACAENMPSGGATRPGDIVTTMSGQTVEILNTDAEGRLVLCDALTYAERFKPQSVIDIATLTGACIVALGSNTSGLMGNNEALVRQLLKAGEFADDRAWQLPLFDEYQEQLDSPFADIANIGGPKAGTITAGCFLSRFAKKYHWAHLDIAGTAWISGGKDKGATGRPVPLLTQYLLERAK.

Residues Lys266 and Asp271 each contribute to the Mn(2+) site. Lys278 is a catalytic residue. The Mn(2+) site is built by Asp289, Asp348, and Glu350. Residue Arg352 is part of the active site.

This sequence belongs to the peptidase M17 family. Requires Mn(2+) as cofactor.

Its subcellular location is the cytoplasm. The catalysed reaction is Release of an N-terminal amino acid, Xaa-|-Yaa-, in which Xaa is preferably Leu, but may be other amino acids including Pro although not Arg or Lys, and Yaa may be Pro. Amino acid amides and methyl esters are also readily hydrolyzed, but rates on arylamides are exceedingly low.. The enzyme catalyses Release of an N-terminal amino acid, preferentially leucine, but not glutamic or aspartic acids.. Its function is as follows. Presumably involved in the processing and regular turnover of intracellular proteins. Catalyzes the removal of unsubstituted N-terminal amino acids from various peptides. This chain is Probable cytosol aminopeptidase, found in Pseudomonas aeruginosa (strain LESB58).